The chain runs to 354 residues: UDP-3-O-acylglucosamine N-acyltransferase (354 aa).

His-247 acts as the Proton acceptor in catalysis.

This sequence belongs to the transferase hexapeptide repeat family. LpxD subfamily. Homotrimer.

The catalysed reaction is a UDP-3-O-[(3R)-3-hydroxyacyl]-alpha-D-glucosamine + a (3R)-hydroxyacyl-[ACP] = a UDP-2-N,3-O-bis[(3R)-3-hydroxyacyl]-alpha-D-glucosamine + holo-[ACP] + H(+). It participates in bacterial outer membrane biogenesis; LPS lipid A biosynthesis. Functionally, catalyzes the N-acylation of UDP-3-O-acylglucosamine using 3-hydroxyacyl-ACP as the acyl donor. Is involved in the biosynthesis of lipid A, a phosphorylated glycolipid that anchors the lipopolysaccharide to the outer membrane of the cell. In Chlamydia trachomatis serovar L2 (strain ATCC VR-902B / DSM 19102 / 434/Bu), this protein is UDP-3-O-acylglucosamine N-acyltransferase.